The chain runs to 491 residues: Cytosolic Fe-S cluster assembly factor NAR1 (491 aa).

Residues Cys-20, Cys-59, Cys-62, Cys-65, Cys-177, Cys-231, Cys-412, and Cys-416 each coordinate [4Fe-4S] cluster.

The protein belongs to the NARF family. In terms of assembly, interacts with CIA1.

The protein localises to the cytoplasm. The protein resides in the nucleus. Essential component of a cytosolic Fe/S protein assembly machinery. Required for maturation of extramitochondrial Fe/S proteins. May play a role in the transfer of pre-assembled Fe/S clusters to target apoproteins. In Saccharomyces cerevisiae (strain ATCC 204508 / S288c) (Baker's yeast), this protein is Cytosolic Fe-S cluster assembly factor NAR1 (NAR1).